Here is a 254-residue protein sequence, read N- to C-terminus: Probable WRKY transcription factor 67 (254 aa).

A DNA-binding region (WRKY) is located at residues 102–170 (SRTMCPNDGF…YLGKHVCKAF (69 aa)).

Belongs to the WRKY group III family.

It localises to the nucleus. Transcription factor. Interacts specifically with the W box (5'-(T)TGAC[CT]-3'), a frequently occurring elicitor-responsive cis-acting element. The polypeptide is Probable WRKY transcription factor 67 (WRKY67) (Arabidopsis thaliana (Mouse-ear cress)).